We begin with the raw amino-acid sequence, 291 residues long: Phosphate import ATP-binding protein PstB (291 aa).

Positions 45-286 (YSTQNLDLWY…PADKQTEDYI (242 aa)) constitute an ABC transporter domain. 77–84 (GPSGCGKS) lines the ATP pocket.

Belongs to the ABC transporter superfamily. Phosphate importer (TC 3.A.1.7) family. As to quaternary structure, the complex is composed of two ATP-binding proteins (PstB), two transmembrane proteins (PstC and PstA) and a solute-binding protein (PstS).

The protein resides in the cell membrane. It carries out the reaction phosphate(out) + ATP + H2O = ADP + 2 phosphate(in) + H(+). Its function is as follows. Part of the ABC transporter complex PstSACB involved in phosphate import. Responsible for energy coupling to the transport system. The sequence is that of Phosphate import ATP-binding protein PstB from Staphylococcus epidermidis (strain ATCC 35984 / DSM 28319 / BCRC 17069 / CCUG 31568 / BM 3577 / RP62A).